The sequence spans 739 residues: Vascular cell adhesion protein 1 (739 aa).

An N-terminal signal peptide occupies residues 1-24 (MPVKMVAIFGASTVLWILFAVSQA). 7 consecutive Ig-like C2-type domains span residues 25–111 (FKIE…IQVD), 119–212 (PEIQ…KERE), 223–309 (PKNT…LIVQ), 312–397 (PFTV…KTIQ), 408–506 (EIEI…QTLY), 514–595 (PTIW…VELI), and 601–682 (KDIQ…RSLT). The Extracellular segment spans residues 25–698 (FKIEISPEYK…ENNKDYFSPE (674 aa)). Disulfide bonds link C47–C95, C52–C99, C137–C195, C246–C291, and C335–C383. N273 is a glycosylation site (N-linked (GlcNAc...) asparagine). N-linked (GlcNAc...) asparagine glycosylation is found at N424, N531, N561, and N650. C534 and C579 are disulfide-bonded. The helical transmembrane segment at 699 to 720 (LLALYFASSLVIPAIGMIIYFA) threads the bilayer. The Cytoplasmic segment spans residues 721-739 (RKANMKGSYSLVEAQKSKV).

Binds to ECMV-D capsid proteins and acts as a receptor for this virus. Post-translationally, cleaved by the metalloproteinase ADAM17 to generate the soluble form. In terms of processing, sialoglycoprotein. Ubiquitinated by TRIM65 via 'Lys-48'-linked ubiquitination; leading to proteasomal degradation. In terms of tissue distribution, expressed in aortic endothelial cells, with low expression in the descending thoracic aorta and the outer curvature of the aortic arch, where pulsatory shear stress exists, and high in the inner curvature of the aortic arch, where oscillatory shear stress prevails (at protein level). Expressed on inflamed vascular endothelium, as well as on macrophage-like and dendritic cell types in both normal and inflamed tissue.

The protein localises to the cell membrane. It localises to the secreted. In terms of biological role, cell adhesion glycoprotein predominantly expressed on the surface of endothelial cells that plays an important role in immune surveillance and inflammation. Acts as a major regulator of leukocyte adhesion to the endothelium through interaction with different types of integrins. During inflammatory responses, binds ligands on the surface of activated endothelial cells to initiate the activation of calcium channels and the plasma membrane-associated small GTPase RAC1 leading to leukocyte transendothelial migration. Also serves as a quality-control checkpoint for entry into bone marrow by providing a 'don't-eat-me' stamping in the context of major histocompatibility complex (MHC) class-I presentation. The chain is Vascular cell adhesion protein 1 (Vcam1) from Rattus norvegicus (Rat).